The sequence spans 298 residues: 4-hydroxy-tetrahydrodipicolinate synthase (298 aa).

A pyruvate-binding site is contributed by threonine 45. Tyrosine 133 (proton donor/acceptor) is an active-site residue. The Schiff-base intermediate with substrate role is filled by lysine 161. Isoleucine 203 provides a ligand contact to pyruvate.

The protein belongs to the DapA family. Homotetramer; dimer of dimers.

It localises to the cytoplasm. The enzyme catalyses L-aspartate 4-semialdehyde + pyruvate = (2S,4S)-4-hydroxy-2,3,4,5-tetrahydrodipicolinate + H2O + H(+). Its pathway is amino-acid biosynthesis; L-lysine biosynthesis via DAP pathway; (S)-tetrahydrodipicolinate from L-aspartate: step 3/4. In terms of biological role, catalyzes the condensation of (S)-aspartate-beta-semialdehyde [(S)-ASA] and pyruvate to 4-hydroxy-tetrahydrodipicolinate (HTPA). The protein is 4-hydroxy-tetrahydrodipicolinate synthase of Wigglesworthia glossinidia brevipalpis.